Reading from the N-terminus, the 122-residue chain is Large ribosomal subunit protein uL14 (122 aa).

This sequence belongs to the universal ribosomal protein uL14 family. As to quaternary structure, part of the 50S ribosomal subunit. Forms a cluster with proteins L3 and L19. In the 70S ribosome, L14 and L19 interact and together make contacts with the 16S rRNA in bridges B5 and B8.

Binds to 23S rRNA. Forms part of two intersubunit bridges in the 70S ribosome. In Caldicellulosiruptor bescii (strain ATCC BAA-1888 / DSM 6725 / KCTC 15123 / Z-1320) (Anaerocellum thermophilum), this protein is Large ribosomal subunit protein uL14.